The following is a 416-amino-acid chain: Phosphoglycerate kinase (416 aa).

Residues 24 to 26, R40, 63 to 66, R126, and R166 each bind substrate; these read DLN and HLGR. Residues K216, G304, E335, and 364-367 contribute to the ATP site; that span reads GGDS.

Belongs to the phosphoglycerate kinase family. Monomer.

The protein localises to the cytoplasm. It carries out the reaction (2R)-3-phosphoglycerate + ATP = (2R)-3-phospho-glyceroyl phosphate + ADP. Its pathway is carbohydrate degradation; glycolysis; pyruvate from D-glyceraldehyde 3-phosphate: step 2/5. This is Phosphoglycerate kinase from Mycobacterium leprae (strain Br4923).